We begin with the raw amino-acid sequence, 229 residues long: Cytochrome c oxidase subunit 2 (229 aa).

Residues 1-26 (MSTWANLGLQDSASPLMEQLIFFHDH) are Mitochondrial intermembrane-facing. Residues 27–48 (ALLILVMITVLVGYLMFMLFFN) traverse the membrane as a helical segment. The Mitochondrial matrix segment spans residues 49-62 (SYVNRFLLHGQLIE). Residues 63 to 82 (MIWTILPAIILLFIAMPSLR) form a helical membrane-spanning segment. At 83–229 (LLYLLDEINE…IKWISNSVNS (147 aa)) the chain is on the mitochondrial intermembrane side. Cu cation contacts are provided by His-161, Cys-196, Glu-198, Cys-200, His-204, and Met-207. Glu-198 lines the Mg(2+) pocket.

It belongs to the cytochrome c oxidase subunit 2 family. In terms of assembly, component of the cytochrome c oxidase (complex IV, CIV), a multisubunit enzyme composed of a catalytic core of 3 subunits and several supernumerary subunits. The complex exists as a monomer or a dimer and forms supercomplexes (SCs) in the inner mitochondrial membrane with ubiquinol-cytochrome c oxidoreductase (cytochrome b-c1 complex, complex III, CIII). It depends on Cu cation as a cofactor.

Its subcellular location is the mitochondrion inner membrane. It catalyses the reaction 4 Fe(II)-[cytochrome c] + O2 + 8 H(+)(in) = 4 Fe(III)-[cytochrome c] + 2 H2O + 4 H(+)(out). Component of the cytochrome c oxidase, the last enzyme in the mitochondrial electron transport chain which drives oxidative phosphorylation. The respiratory chain contains 3 multisubunit complexes succinate dehydrogenase (complex II, CII), ubiquinol-cytochrome c oxidoreductase (cytochrome b-c1 complex, complex III, CIII) and cytochrome c oxidase (complex IV, CIV), that cooperate to transfer electrons derived from NADH and succinate to molecular oxygen, creating an electrochemical gradient over the inner membrane that drives transmembrane transport and the ATP synthase. Cytochrome c oxidase is the component of the respiratory chain that catalyzes the reduction of oxygen to water. Electrons originating from reduced cytochrome c in the intermembrane space (IMS) are transferred via the dinuclear copper A center (CU(A)) of subunit 2 and heme A of subunit 1 to the active site in subunit 1, a binuclear center (BNC) formed by heme A3 and copper B (CU(B)). The BNC reduces molecular oxygen to 2 water molecules using 4 electrons from cytochrome c in the IMS and 4 protons from the mitochondrial matrix. The protein is Cytochrome c oxidase subunit 2 (mt:CoII) of Drosophila narragansett (Fruit fly).